The primary structure comprises 325 residues: Sulfite dehydrogenase subunit C (325 aa).

Helical transmembrane passes span 5–25 (FSVIFLTTLLGAGQGLYLAMV), 43–63 (FYAVGSLVALLLLIAGLGASF), 87–107 (EVIVLPIVMALVFAYGVAHWF), 126–146 (LLLGVLGTIASLALFVCTAMI), 165–185 (FLFLGAASGFMLAAAYSAYIG), 186–206 (NPLVTFYGTWAVILTLVGLAS), 266–286 (VYLVLVFPIPVLLIGLSYLIG), and 290–310 (LPIIAFFVQFAGLLIERWSFF).

It belongs to the DmsC family. Forms a heterotrimeric membrane-bound complex composed of a catalytic heterodimer (SoeAB) and a membrane anchor protein (SoeC).

The protein localises to the cell inner membrane. In terms of biological role, part of the SoeABC complex that catalyzes the oxidation of sulfite to sulfate. SoeC probably anchors and stabilizes the catalytic subunits. This Allochromatium vinosum (strain ATCC 17899 / DSM 180 / NBRC 103801 / NCIMB 10441 / D) (Chromatium vinosum) protein is Sulfite dehydrogenase subunit C.